The chain runs to 224 residues: MSFTEDQEKIALEILSKDKHEFYEILKVDRKATDSEIKKAYRKLAIKLHPDKNSHPKAGEAFKVINRAFEVLSNEEKRSIYDRIGRDPDDRQMPSRGAASGFRGSAGGSPMGGGFEDMFFNSRFGGQRAGPPEDIFDFLFNAGGSPFGASPFGPSASTFSFGGPGGFRVYTNNRGGSPFMRQQPRSRQQQQQAEENAVNSQLKNMLVLFIIFIVLPMIKDYLFS.

The 70-residue stretch at Asp18–Asp87 folds into the J domain. Residues Ile84–Met93 are compositionally biased toward basic and acidic residues. The disordered stretch occupies residues Ile84–Gly107. Ser109 bears the Phosphoserine mark. Positions Asn173 to Gln192 are disordered. Positions Arg181 to Gln192 are enriched in low complexity.

This is Protein HLJ1 (HLJ1) from Saccharomyces cerevisiae (strain ATCC 204508 / S288c) (Baker's yeast).